The sequence spans 896 residues: MKVMDALQSGRRKPLPVALLCILVTVFCVLECHGADLTSPTKKSAPLRITKPQPTSQQAKPISITTRAPTTVASTTDDEVSSSVDGQLAPLISSTTEGPSSGTTASLVPEICLNGLQLTVNSADEGTVIRKQEEFVKILEGDVVLSVLTKDPDSALFVINRVNQANLIMADFEIGIRAISIDNASLAENLLIQEVQFLQQCTTYSMGIFVDWELYKQLESVIKDLEYNIWPIPGTRAHLFPKVAHLLHQMPWGEKIASVEIATETLEMYNEFMEAARQEHMCLMHFKSDDNVYIMFGNKLASHFKENGTLFSVPTDRTDDEFLADLPNRAFVLMENEIDLSTAVELDATPTALDEILIGKSVLPSRVLSFAGSIIDLMNWLRGSLSKHCKRGEEHDLYVLESCFNFLNFIEDWRTSEYRQAHDTAEILSLLLMRKLGTAMNFQMYQKKVLTLDKITGESRTELREIASQNFVTNVTTYYHYNRDNHTSLELKTKFGQVFNCQYSAGDNRRYPFLFDGESVMFWRIKMDTWVATGLTAAILGLIATLAILVFIVVRISLGDVFEGNPTTSILLLLSLILVFCSFVPYSIEYVGEQRNSHVTFEDAQTLNTLCAVRVFIMTLVYCFVFSLLLCRAVMLASIGSEGGFLSHVNGYIQAVICAFSVVAQVGMSVQLLVVMHVASETVSCENIYYGRWLWGLLAYDFALLCCVGALIPSIYRSQRNYREGILIVIGSVLIMVIWVAWIALSLFGDEWRDAAIPLGLQASGWAVLVGILIPRTFLIVRGIERSDIAQALPSLTSLAFAQNNQYSSEQSVYECVNPAMRHCSQDEVNHQSPSEIPTLPLRGGGPRRQQFFANLRQANANINPQRPPPRPQQSPSRSSVSSLPPSPDHNKITRF.

Residues 1–31 (MKVMDALQSGRRKPLPVALLCILVTVFCVLE) form the signal peptide. Residues 32 to 530 (CHGADLTSPT…MFWRIKMDTW (499 aa)) lie on the Extracellular side of the membrane. The tract at residues 38-84 (TSPTKKSAPLRITKPQPTSQQAKPISITTRAPTTVASTTDDEVSSSV) is disordered. A compositionally biased stretch (polar residues) spans 52 to 64 (PQPTSQQAKPISI). The span at 65–84 (TTRAPTTVASTTDDEVSSSV) shows a compositional bias: low complexity. N-linked (GlcNAc...) asparagine glycans are attached at residues Asn-183, Asn-307, Asn-474, and Asn-485. 7 helical membrane passes run 531 to 554 (VATG…FIVV), 570 to 588 (ILLL…PYSI), 615 to 637 (VFIM…VMLA), 655 to 676 (AVIC…LVVM), 693 to 712 (WLWG…GALI), 728 to 748 (IVIG…LSLF), and 759 to 781 (LGLQ…FLIV). Over 782-896 (RGIERSDIAQ…SPDHNKITRF (115 aa)) the chain is Cytoplasmic. Disordered stretches follow at residues 825 to 844 (SQDE…PLRG) and 861 to 896 (ANIN…ITRF). The span at 874 to 884 (QSPSRSSVSSL) shows a compositional bias: low complexity.

The protein belongs to the G-protein coupled receptor 3 family. Expressed exclusively by R8 photoreceptor cells and is internalized in a sev-dependent manner by R7 cells.

It is found in the cell membrane. In terms of biological role, acts as a ligand for sevenless tyrosine-kinase receptor during eye development. This chain is Protein bride of sevenless (boss), found in Drosophila melanogaster (Fruit fly).